A 351-amino-acid chain; its full sequence is Outer membrane porin protein 32 (351 aa).

Residues 1–19 (MKKSLIALAVLAASGAAMA) form the signal peptide. Pyrrolidone carboxylic acid is present on Gln20.

The protein to bacterial outer membrane proteins and porins. In terms of assembly, homotrimer.

It is found in the cell outer membrane. In terms of biological role, forms anion selective channels. This is Outer membrane porin protein 32 (omp32) from Delftia acidovorans (Pseudomonas acidovorans).